Consider the following 507-residue polypeptide: Maturase K (507 aa).

It belongs to the intron maturase 2 family. MatK subfamily.

Its subcellular location is the plastid. It is found in the chloroplast. Functionally, usually encoded in the trnK tRNA gene intron. Probably assists in splicing its own and other chloroplast group II introns. The sequence is that of Maturase K from Robinia pseudoacacia (Black locust).